The following is a 560-amino-acid chain: uncharacterized protein (560 aa).

The signal sequence occupies residues 1–29 (MKSALKKSVVSTSISLILASGMAAFAAHA). Ca(2+) contacts are provided by aspartate 66, aspartate 67, and serine 132. Serine 132 (nucleophile) is an active-site residue. Serine 132 bears the 3-oxoalanine (Ser) mark. Histidine 185 is an active-site residue. Ca(2+) contacts are provided by aspartate 345 and asparagine 346.

The protein belongs to the sulfatase family. Requires Ca(2+) as cofactor. Post-translationally, the conversion to 3-oxoalanine (also known as C-formylglycine, FGly), of a serine or cysteine residue in prokaryotes and of a cysteine residue in eukaryotes, is critical for catalytic activity.

This is an uncharacterized protein from Escherichia coli (strain K12).